We begin with the raw amino-acid sequence, 607 residues long: Large ribosomal subunit assembly factor BipA (607 aa).

The tr-type G domain maps to E3–D198. GTP-binding positions include D15–T20 and N128–D131.

This sequence belongs to the TRAFAC class translation factor GTPase superfamily. Classic translation factor GTPase family. BipA subfamily. As to quaternary structure, monomer.

It is found in the cytoplasm. The enzyme catalyses GTP + H2O = GDP + phosphate + H(+). Its function is as follows. A 50S ribosomal subunit assembly protein with GTPase activity, required for 50S subunit assembly at low temperatures, may also play a role in translation. Binds GTP and analogs. Binds the 70S ribosome between the 30S and 50S subunits, in a similar position as ribosome-bound EF-G; it contacts a number of ribosomal proteins, both rRNAs and the A-site tRNA. This is Large ribosomal subunit assembly factor BipA from Shigella flexneri.